The sequence spans 61 residues: Probable tautomerase lin2709 (61 aa).

The active-site Proton acceptor; via imino nitrogen is Pro2.

This sequence belongs to the 4-oxalocrotonate tautomerase family.

The polypeptide is Probable tautomerase lin2709 (Listeria innocua serovar 6a (strain ATCC BAA-680 / CLIP 11262)).